Reading from the N-terminus, the 116-residue chain is T cell receptor alpha variable 19 (116 aa).

The N-terminal stretch at 1-21 (MLTASLLRAVIASICVVSSMA) is a signal peptide. The 95-residue stretch at 22-116 (QKVTQAQTEI…SAVYFCALSE (95 aa)) folds into the Ig-like domain. The cysteines at positions 43 and 112 are disulfide-linked. Residue N96 is glycosylated (N-linked (GlcNAc...) asparagine).

As to quaternary structure, alpha-beta TR is a heterodimer composed of an alpha and beta chain; disulfide-linked. The alpha-beta TR is associated with the transmembrane signaling CD3 coreceptor proteins to form the TR-CD3 (TcR or TCR). The assembly of alpha-beta TR heterodimers with CD3 occurs in the endoplasmic reticulum where a single alpha-beta TR heterodimer associates with one CD3D-CD3E heterodimer, one CD3G-CD3E heterodimer and one CD247 homodimer forming a stable octameric structure. CD3D-CD3E and CD3G-CD3E heterodimers preferentially associate with TR alpha and TR beta chains, respectively. The association of the CD247 homodimer is the last step of TcR assembly in the endoplasmic reticulum and is required for transport to the cell surface.

It is found in the cell membrane. Its function is as follows. V region of the variable domain of T cell receptor (TR) alpha chain that participates in the antigen recognition. Alpha-beta T cell receptors are antigen specific receptors which are essential to the immune response and are present on the cell surface of T lymphocytes. Recognize peptide-major histocompatibility (MH) (pMH) complexes that are displayed by antigen presenting cells (APC), a prerequisite for efficient T cell adaptive immunity against pathogens. Binding of alpha-beta TR to pMH complex initiates TR-CD3 clustering on the cell surface and intracellular activation of LCK that phosphorylates the ITAM motifs of CD3G, CD3D, CD3E and CD247 enabling the recruitment of ZAP70. In turn ZAP70 phosphorylates LAT, which recruits numerous signaling molecules to form the LAT signalosome. The LAT signalosome propagates signal branching to three major signaling pathways, the calcium, the mitogen-activated protein kinase (MAPK) kinase and the nuclear factor NF-kappa-B (NF-kB) pathways, leading to the mobilization of transcription factors that are critical for gene expression and essential for T cell growth and differentiation. The T cell repertoire is generated in the thymus, by V-(D)-J rearrangement. This repertoire is then shaped by intrathymic selection events to generate a peripheral T cell pool of self-MH restricted, non-autoaggressive T cells. Post-thymic interaction of alpha-beta TR with the pMH complexes shapes TR structural and functional avidity. The protein is T cell receptor alpha variable 19 of Homo sapiens (Human).